The following is a 562-amino-acid chain: Efflux pump apf11 (562 aa).

Composition is skewed to low complexity over residues 1-10 and 18-30; these read MGDISAATKA and TPETNTTSSSSDT. The disordered stretch occupies residues 1-36; it reads MGDISAATKAPAPPTPATPETNTTSSSSDTDVQHEP. The N-linked (GlcNAc...) asparagine glycan is linked to asparagine 22. 8 helical membrane-spanning segments follow: residues 46 to 66, 83 to 103, 110 to 130, 141 to 161, 169 to 189, 200 to 220, 249 to 269, and 278 to 298; these read LVIFALGLAILVGVLDATIVA, AWYGSAYLLVTGATQPIFGKI, KLVFLSSVAILEVGSLVCALA, AIAGLGAAGVISGGLIITALT, VYTAILGSLEGVGVIIGPIIG, WCFWINLPIGAVLCAILVFCL, GGLAIAGSITCLLLALEWGGT, and IIVLLVVFGVSLICVAVHQHW. Asparagine 312 carries an N-linked (GlcNAc...) asparagine glycan. The next 6 helical transmembrane spans lie at 317–337, 356–376, 382–404, 414–434, 447–467, and 516–536; these read MFLLCGLCFAGAQFTVLYYLP, LAMVVSVIVVSVIAGGSAGAV, FVFFATIFSSIGAGMLYTLHPSI, ILFGAGSGTGIQQAIVGVQVA, VMLVNTLAGSIFIAVSQTLFL, and FLIGLVLCSITVLTWPLIRWI.

This sequence belongs to the major facilitator superfamily. TCR/Tet family.

It localises to the membrane. It participates in secondary metabolite biosynthesis. Efflux pump; part of the gene cluster that mediates the biosynthesis of the cyclic tetrapeptide apicidin F (APF). The chain is Efflux pump apf11 (apf11) from Gibberella fujikuroi (strain CBS 195.34 / IMI 58289 / NRRL A-6831) (Bakanae and foot rot disease fungus).